The primary structure comprises 128 residues: Cytochrome c oxidase subunit 5B, mitochondrial (128 aa).

A mitochondrion-targeting transit peptide spans 1 to 30; that stretch reads MKRGSAALEVRELKMQTPTASCVLSTQRAN. K67 and K85 each carry N6-acetyllysine. Residues C90, C92, C112, and C115 each coordinate Zn(2+). K120 carries the N6-acetyllysine modification.

Belongs to the cytochrome c oxidase 5b family. Expressed in testis. Not expressed in brain, heart, liver, kidney, spleen, lung, duodenum, muscle, epididymis, vagina, uterus and ovary.

The protein localises to the mitochondrion inner membrane. In terms of biological role, this protein is one of the nuclear-coded polypeptide chains of cytochrome c oxidase, the terminal oxidase in mitochondrial electron transport. In Vulpes vulpes (Red fox), this protein is Cytochrome c oxidase subunit 5B, mitochondrial.